Here is a 989-residue protein sequence, read N- to C-terminus: Phosphoenolpyruvate carboxylase (989 aa).

Active-site residues include histidine 175 and lysine 630.

The protein belongs to the PEPCase type 1 family. Mg(2+) is required as a cofactor.

It catalyses the reaction oxaloacetate + phosphate = phosphoenolpyruvate + hydrogencarbonate. In terms of biological role, forms oxaloacetate, a four-carbon dicarboxylic acid source for the tricarboxylic acid cycle. The polypeptide is Phosphoenolpyruvate carboxylase (Prochlorococcus marinus (strain MIT 9301)).